A 351-amino-acid polypeptide reads, in one-letter code: Histidinol-phosphate aminotransferase 1 (351 aa).

Lys-210 bears the N6-(pyridoxal phosphate)lysine mark.

It belongs to the class-II pyridoxal-phosphate-dependent aminotransferase family. Histidinol-phosphate aminotransferase subfamily. As to quaternary structure, homodimer. Requires pyridoxal 5'-phosphate as cofactor.

It carries out the reaction L-histidinol phosphate + 2-oxoglutarate = 3-(imidazol-4-yl)-2-oxopropyl phosphate + L-glutamate. It functions in the pathway amino-acid biosynthesis; L-histidine biosynthesis; L-histidine from 5-phospho-alpha-D-ribose 1-diphosphate: step 7/9. In Pasteurella multocida (strain Pm70), this protein is Histidinol-phosphate aminotransferase 1 (hisC1).